The chain runs to 175 residues: Large ribosomal subunit protein uL10 (175 aa).

Belongs to the universal ribosomal protein uL10 family. As to quaternary structure, part of the ribosomal stalk of the 50S ribosomal subunit. The N-terminus interacts with L11 and the large rRNA to form the base of the stalk. The C-terminus forms an elongated spine to which L12 dimers bind in a sequential fashion forming a multimeric L10(L12)X complex.

Its function is as follows. Forms part of the ribosomal stalk, playing a central role in the interaction of the ribosome with GTP-bound translation factors. This Pelotomaculum thermopropionicum (strain DSM 13744 / JCM 10971 / SI) protein is Large ribosomal subunit protein uL10.